Here is a 338-residue protein sequence, read N- to C-terminus: Lipoate-protein ligase A (338 aa).

Positions Pro-29–Val-216 constitute a BPL/LPL catalytic domain. Residues Arg-71, Gly-76–Phe-79, and Lys-134 each bind ATP. (R)-lipoate is bound at residue Lys-134.

It belongs to the LplA family. As to quaternary structure, monomer.

It localises to the cytoplasm. The enzyme catalyses L-lysyl-[lipoyl-carrier protein] + (R)-lipoate + ATP = N(6)-[(R)-lipoyl]-L-lysyl-[lipoyl-carrier protein] + AMP + diphosphate + H(+). It functions in the pathway protein modification; protein lipoylation via exogenous pathway; protein N(6)-(lipoyl)lysine from lipoate: step 1/2. It participates in protein modification; protein lipoylation via exogenous pathway; protein N(6)-(lipoyl)lysine from lipoate: step 2/2. Catalyzes both the ATP-dependent activation of exogenously supplied lipoate to lipoyl-AMP and the transfer of the activated lipoyl onto the lipoyl domains of lipoate-dependent enzymes. This chain is Lipoate-protein ligase A, found in Salmonella schwarzengrund (strain CVM19633).